A 403-amino-acid polypeptide reads, in one-letter code: Tryptophan synthase beta chain 1 (403 aa).

Residue Lys93 is modified to N6-(pyridoxal phosphate)lysine.

The protein belongs to the TrpB family. In terms of assembly, tetramer of two alpha and two beta chains. Requires pyridoxal 5'-phosphate as cofactor.

It catalyses the reaction (1S,2R)-1-C-(indol-3-yl)glycerol 3-phosphate + L-serine = D-glyceraldehyde 3-phosphate + L-tryptophan + H2O. The protein operates within amino-acid biosynthesis; L-tryptophan biosynthesis; L-tryptophan from chorismate: step 5/5. Its function is as follows. The beta subunit is responsible for the synthesis of L-tryptophan from indole and L-serine. The sequence is that of Tryptophan synthase beta chain 1 (trpB1) from Methanosarcina acetivorans (strain ATCC 35395 / DSM 2834 / JCM 12185 / C2A).